The primary structure comprises 318 residues: Beta-ketoacyl-[acyl-carrier-protein] synthase III (318 aa).

Residues Cys112 and His245 contribute to the active site. The tract at residues 246–250 (QANIR) is ACP-binding. Residue Asn275 is part of the active site.

The protein belongs to the thiolase-like superfamily. FabH family. Homodimer.

The protein resides in the cytoplasm. It catalyses the reaction malonyl-[ACP] + acetyl-CoA + H(+) = 3-oxobutanoyl-[ACP] + CO2 + CoA. It participates in lipid metabolism; fatty acid biosynthesis. Catalyzes the condensation reaction of fatty acid synthesis by the addition to an acyl acceptor of two carbons from malonyl-ACP. Catalyzes the first condensation reaction which initiates fatty acid synthesis and may therefore play a role in governing the total rate of fatty acid production. Possesses both acetoacetyl-ACP synthase and acetyl transacylase activities. Its substrate specificity determines the biosynthesis of branched-chain and/or straight-chain of fatty acids. The protein is Beta-ketoacyl-[acyl-carrier-protein] synthase III of Rickettsia conorii (strain ATCC VR-613 / Malish 7).